The chain runs to 733 residues: Catalase-peroxidase (733 aa).

Positions 1–24 (MTDDSTCPVTGGADKQVTGRGQSY) are disordered. Positions 96 to 219 (WHSAGTYRTL…LAAVQMGLIY (124 aa)) form a cross-link, tryptophyl-tyrosyl-methioninium (Trp-Tyr) (with M-245). The active-site Proton acceptor is His97. Positions 219–245 (YVNPEGPNGKPDPVAAAKDIRETFARM) form a cross-link, tryptophyl-tyrosyl-methioninium (Tyr-Met) (with W-96). His260 provides a ligand contact to heme b.

Belongs to the peroxidase family. Peroxidase/catalase subfamily. In terms of assembly, homodimer or homotetramer. Heme b is required as a cofactor. Post-translationally, formation of the three residue Trp-Tyr-Met cross-link is important for the catalase, but not the peroxidase activity of the enzyme.

It carries out the reaction H2O2 + AH2 = A + 2 H2O. The catalysed reaction is 2 H2O2 = O2 + 2 H2O. Its function is as follows. Bifunctional enzyme with both catalase and broad-spectrum peroxidase activity. The polypeptide is Catalase-peroxidase (Methanoregula boonei (strain DSM 21154 / JCM 14090 / 6A8)).